The following is a 192-amino-acid chain: Large ribosomal subunit protein uL5 (192 aa).

This sequence belongs to the universal ribosomal protein uL5 family. As to quaternary structure, part of the 50S ribosomal subunit; contacts the 5S rRNA and probably tRNA. Forms a bridge to the 30S subunit in the 70S ribosome.

Functionally, this is one of the proteins that bind and probably mediate the attachment of the 5S RNA into the large ribosomal subunit, where it forms part of the central protuberance. In the 70S ribosome it contacts protein S13 of the 30S subunit (bridge B1b), connecting the 2 subunits; this bridge is implicated in subunit movement. May contact the P site tRNA; the 5S rRNA and some of its associated proteins might help stabilize positioning of ribosome-bound tRNAs. This chain is Large ribosomal subunit protein uL5, found in Aeropyrum pernix (strain ATCC 700893 / DSM 11879 / JCM 9820 / NBRC 100138 / K1).